A 138-amino-acid polypeptide reads, in one-letter code: Holo-[acyl-carrier-protein] synthase (138 aa).

Mg(2+) contacts are provided by Asp-8 and Glu-60.

Belongs to the P-Pant transferase superfamily. AcpS family. Mg(2+) serves as cofactor.

Its subcellular location is the cytoplasm. The enzyme catalyses apo-[ACP] + CoA = holo-[ACP] + adenosine 3',5'-bisphosphate + H(+). Its function is as follows. Transfers the 4'-phosphopantetheine moiety from coenzyme A to a Ser of acyl-carrier-protein. In Magnetococcus marinus (strain ATCC BAA-1437 / JCM 17883 / MC-1), this protein is Holo-[acyl-carrier-protein] synthase.